Reading from the N-terminus, the 91-residue chain is Metalloproteinase inhibitor 2 (91 aa).

Positions 1–91 (KAVSEKEVDS…FIVPWDTLST (91 aa)) constitute an NTR domain.

The protein belongs to the protease inhibitor I35 (TIMP) family. Post-translationally, the activity of TIMP2 is dependent on the presence of disulfide bonds.

The protein resides in the secreted. Its function is as follows. Complexes with metalloproteinases (such as collagenases) and irreversibly inactivates them. This chain is Metalloproteinase inhibitor 2 (TIMP2), found in Equus caballus (Horse).